The primary structure comprises 320 residues: Aminoacyl tRNA synthase complex-interacting multifunctional protein 2 (320 aa).

Phosphoserine is present on serine 36. The interval 82–162 is interaction with PRKN; the sequence is TPDADLDVTN…HTHSAVRSVP (81 aa). An interaction with TP53 region spans residues 162-225; sequence PANLLQCFGE…FLFSLFGQKQ (64 aa). A GST C-terminal domain is found at 220–317; sequence LFGQKQDAVN…NLAPFHTALK (98 aa).

In terms of assembly, part of the multisynthetase complex (MSC), a multisubunit complex that groups tRNA ligases for Arg (RARS1), Asp (DARS1), Gln (QARS1), Ile (IARS1), Leu (LARS1), Lys (KARS1), Met (MARS1) the bifunctional ligase for Glu and Pro (EPRS1) and the auxiliary subunits AIMP1/p43, AIMP2/p38 and EEF1E1/p18. Interacts (via N-terminus) with KARS1. Interacts with EPRS1. Forms a linear complex that contains MARS1, EEF1E1, EPRS1 and AIMP2 that is at the core of the multisubunit complex. Binds FUBP1 (via C-terminus). Interacts in both its unphosphorylated and phosphorylated forms with p53/TP53 (via N-terminus) in the nucleus following UV irradiation. Interacts (via N-terminus) with PRKN/parkin (via first RING-type domain). Interacts with TARS3. Post-translationally, phosphorylated on serine residues in response to UV irradiation. Ubiquitinated by PRKN, leading to its degradation by the proteasome.

The protein localises to the cytoplasm. The protein resides in the cytosol. It localises to the nucleus. Required for assembly and stability of the aminoacyl-tRNA synthase complex. Mediates ubiquitination and degradation of FUBP1, a transcriptional activator of MYC, leading to MYC down-regulation which is required for aveolar type II cell differentiation. Blocks MDM2-mediated ubiquitination and degradation of p53/TP53. Functions as a proapoptotic factor. The polypeptide is Aminoacyl tRNA synthase complex-interacting multifunctional protein 2 (AIMP2) (Bos taurus (Bovine)).